Here is an 858-residue protein sequence, read N- to C-terminus: Bifunctional uridylyltransferase/uridylyl-removing enzyme (858 aa).

The tract at residues Met1 to Leu324 is uridylyltransferase. The segment at Ser325–Leu681 is uridylyl-removing. One can recognise an HD domain in the interval Val443–Leu565. ACT domains are found at residues Gln682 to Ser761 and Ile790 to Val858.

The protein belongs to the GlnD family. The cofactor is Mg(2+).

The enzyme catalyses [protein-PII]-L-tyrosine + UTP = [protein-PII]-uridylyl-L-tyrosine + diphosphate. The catalysed reaction is [protein-PII]-uridylyl-L-tyrosine + H2O = [protein-PII]-L-tyrosine + UMP + H(+). Uridylyltransferase (UTase) activity is inhibited by glutamine, while glutamine activates uridylyl-removing (UR) activity. In terms of biological role, modifies, by uridylylation and deuridylylation, the PII regulatory proteins (GlnB and homologs), in response to the nitrogen status of the cell that GlnD senses through the glutamine level. Under low glutamine levels, catalyzes the conversion of the PII proteins and UTP to PII-UMP and PPi, while under higher glutamine levels, GlnD hydrolyzes PII-UMP to PII and UMP (deuridylylation). Thus, controls uridylylation state and activity of the PII proteins, and plays an important role in the regulation of nitrogen assimilation and metabolism. In Burkholderia mallei (strain NCTC 10247), this protein is Bifunctional uridylyltransferase/uridylyl-removing enzyme.